The following is a 388-amino-acid chain: MAEDGLPKIYSHPPAESTKTTTEATIFFGADNTIPKSETTITSEGDHVTSVNDYMLENDFSTTTGNKLIPPKERQKSEDDVESHLEKEFATLMDIKNPMANESITENFLPVKTGNISSTDAISLIDFSTDIAKEDILLDTIDPGDKDVSLTSEVSGTPKESTAAIADTPILPNIMGKSDVSNYSSSVKFKVPADGNAHITDSSVPEAEITPTTERNLTTIPDITALTEEKITEIDLILPENDPNVVPKLTDSDEEKFITVFELTTTAERDKDNPEDALLTDEESTDEVSVWMERDMANEEESHSVLLTAVESRYDFVIPASVTMNLTEDLLTEEDLPENNRMESVTKNTDELSGTTPDLDAFSHKEDNFTTETGVFKLLKEEPDEFLI.

The segment at 1–20 (MAEDGLPKIYSHPPAESTKT) is disordered. A Phosphothreonine; by CK2 modification is found at T280. S312 and S344 each carry phosphoserine.

It is found in the cytoplasm. The protein localises to the mitochondrion inner membrane. Its subcellular location is the cell projection. The protein resides in the cilium. It localises to the flagellum. It is found in the cytoplasmic vesicle. The protein localises to the secretory vesicle. Its subcellular location is the acrosome. Calcium-binding protein. Essential for maintaining the structural integrity of the sperm flagella. This chain is Calcium-binding and spermatid-specific protein 1 (CABS1), found in Bos taurus (Bovine).